A 436-amino-acid polypeptide reads, in one-letter code: Peptidase B (436 aa).

2 residues coordinate Mn(2+): K201 and D206. K213 is an active-site residue. Mn(2+) contacts are provided by D224, D283, and E285. R287 is a catalytic residue.

The protein belongs to the peptidase M17 family. Homohexamer. It depends on Mn(2+) as a cofactor.

It is found in the cytoplasm. It catalyses the reaction Release of an N-terminal amino acid, Xaa, from a peptide or arylamide. Xaa is preferably Glu or Asp but may be other amino acids, including Leu, Met, His, Cys and Gln.. Its function is as follows. Probably plays an important role in intracellular peptide degradation. In Pectobacterium carotovorum subsp. carotovorum (strain PC1), this protein is Peptidase B.